The primary structure comprises 176 residues: Acireductone dioxygenase (176 aa).

Fe(2+) contacts are provided by histidine 91, histidine 93, glutamate 97, and histidine 136. Ni(2+) is bound by residues histidine 91, histidine 93, glutamate 97, and histidine 136.

Belongs to the acireductone dioxygenase (ARD) family. As to quaternary structure, monomer. It depends on Fe(2+) as a cofactor. Ni(2+) serves as cofactor.

The enzyme catalyses 1,2-dihydroxy-5-(methylsulfanyl)pent-1-en-3-one + O2 = 3-(methylsulfanyl)propanoate + CO + formate + 2 H(+). The catalysed reaction is 1,2-dihydroxy-5-(methylsulfanyl)pent-1-en-3-one + O2 = 4-methylsulfanyl-2-oxobutanoate + formate + 2 H(+). It participates in amino-acid biosynthesis; L-methionine biosynthesis via salvage pathway; L-methionine from S-methyl-5-thio-alpha-D-ribose 1-phosphate: step 5/6. In terms of biological role, catalyzes 2 different reactions between oxygen and the acireductone 1,2-dihydroxy-3-keto-5-methylthiopentene (DHK-MTPene) depending upon the metal bound in the active site. Fe-containing acireductone dioxygenase (Fe-ARD) produces formate and 2-keto-4-methylthiobutyrate (KMTB), the alpha-ketoacid precursor of methionine in the methionine recycle pathway. Ni-containing acireductone dioxygenase (Ni-ARD) produces methylthiopropionate, carbon monoxide and formate, and does not lie on the methionine recycle pathway. The sequence is that of Acireductone dioxygenase from Picosynechococcus sp. (strain ATCC 27264 / PCC 7002 / PR-6) (Agmenellum quadruplicatum).